The primary structure comprises 382 residues: 8-amino-7-oxononanoate synthase (382 aa).

Position 26 (arginine 26) interacts with substrate. A pyridoxal 5'-phosphate-binding site is contributed by 104-105 (GY). Substrate is bound at residue histidine 129. Pyridoxal 5'-phosphate contacts are provided by residues serine 175, 200–203 (DEAH), and 232–235 (TLSK). Lysine 235 bears the N6-(pyridoxal phosphate)lysine mark. Threonine 345 contacts substrate.

The protein belongs to the class-II pyridoxal-phosphate-dependent aminotransferase family. BioF subfamily. In terms of assembly, homodimer. It depends on pyridoxal 5'-phosphate as a cofactor.

The catalysed reaction is 6-carboxyhexanoyl-[ACP] + L-alanine + H(+) = (8S)-8-amino-7-oxononanoate + holo-[ACP] + CO2. It functions in the pathway cofactor biosynthesis; biotin biosynthesis. Catalyzes the decarboxylative condensation of pimeloyl-[acyl-carrier protein] and L-alanine to produce 8-amino-7-oxononanoate (AON), [acyl-carrier protein], and carbon dioxide. The protein is 8-amino-7-oxononanoate synthase (bioF) of Mycolicibacterium smegmatis (strain ATCC 700084 / mc(2)155) (Mycobacterium smegmatis).